Consider the following 225-residue polypeptide: Phosphoserine phosphatase (225 aa).

Met-1 carries the post-translational modification N-acetylmethionine. Asp-20 functions as the Nucleophile in the catalytic mechanism. Residues Asp-20 and Asp-22 each coordinate Mg(2+). 20–22 (DVD) is a binding site for L-serine. Asp-22 serves as the catalytic Proton donor. Met-52 contacts O-phospho-L-serine. Phosphate is bound at residue Gly-53. L-serine is bound by residues 109-111 (SGG) and Lys-158. O-phospho-L-serine contacts are provided by residues 109–111 (SGG) and Lys-158. Mg(2+) is bound at residue Asp-179. O-phospho-L-serine is bound at residue Thr-182. Thr-182 provides a ligand contact to phosphate.

This sequence belongs to the HAD-like hydrolase superfamily. SerB family. Homodimer. Mg(2+) is required as a cofactor.

Its subcellular location is the cytoplasm. It is found in the cytosol. The enzyme catalyses O-phospho-L-serine + H2O = L-serine + phosphate. It catalyses the reaction O-phospho-D-serine + H2O = D-serine + phosphate. Its pathway is amino-acid biosynthesis; L-serine biosynthesis; L-serine from 3-phospho-D-glycerate: step 3/3. Catalyzes the last irreversible step in the biosynthesis of L-serine from carbohydrates, the dephosphorylation of O-phospho-L-serine to L-serine. L-serine can then be used in protein synthesis, to produce other amino acids, in nucleotide metabolism or in glutathione synthesis, or can be racemized to D-serine, a neuromodulator. May also act on O-phospho-D-serine. The polypeptide is Phosphoserine phosphatase (Bos taurus (Bovine)).